The primary structure comprises 383 residues: Homeobox protein SHOOT MERISTEMLESS (383 aa).

Positions 37–58 (HQQHHGHDQQHQHQQQHDGYAY) are disordered. The 21-residue stretch at 263–283 (ELKGQLLRKYSGYLGSLKQEF) folds into the ELK domain. A DNA-binding region (homeobox; TALE-type) is located at residues 284–347 (MKKRKKGKLP…NQRKRHWKPS (64 aa)).

Belongs to the TALE/KNOX homeobox family.

The protein localises to the nucleus. In terms of biological role, required for shoot apical meristem formation during embryogenesis. Probably binds to the DNA sequence 5'-TGAC-3'. This Brassica oleracea (Wild cabbage) protein is Homeobox protein SHOOT MERISTEMLESS (STM).